Consider the following 375-residue polypeptide: DNA replication and repair protein RecF (375 aa).

30–37 (GENAQGKT) is an ATP binding site.

Belongs to the RecF family.

Its subcellular location is the cytoplasm. Its function is as follows. The RecF protein is involved in DNA metabolism; it is required for DNA replication and normal SOS inducibility. RecF binds preferentially to single-stranded, linear DNA. It also seems to bind ATP. This is DNA replication and repair protein RecF from Latilactobacillus sakei subsp. sakei (strain 23K) (Lactobacillus sakei subsp. sakei).